Here is a 708-residue protein sequence, read N- to C-terminus: Otogelin-like protein (708 aa).

Residues 1 to 113 (KIIVNRLARK…SWEIEKSFEV (113 aa)) enclose the VWFD domain. Asn-553 carries an N-linked (GlcNAc...) asparagine glycan. Intrachain disulfides connect Cys-616–Cys-672, Cys-637–Cys-686, Cys-648–Cys-703, and Cys-652–Cys-705. Residues 616–708 (CKREERICQK…EPIDCTCQWN (93 aa)) form the CTCK domain.

Belongs to the otogelin family.

The protein localises to the secreted. This is Otogelin-like protein (OTOGL) from Pongo abelii (Sumatran orangutan).